Reading from the N-terminus, the 114-residue chain is PDZK1-interacting protein 1 (114 aa).

Residues 1-28 (MSALSLLILGLLTAVPPASCQQGLGNLQ) are Extracellular-facing. Residues 29 to 51 (PWMQGLIAVAVFLVLVAIAFAVN) traverse the membrane as a helical segment. Topologically, residues 52–114 (HFWCQEEPEP…EEGKVRSTPM (63 aa)) are cytoplasmic. The residue at position 85 (Ser85) is a Phosphoserine. The interval 94–114 (EHENAYENVPEEEGKVRSTPM) is disordered. A compositionally biased stretch (basic and acidic residues) spans 105–114 (EEGKVRSTPM).

Belongs to the PDZK1-interacting protein 1/SMIM24 family. Forms a heterodimer (via N-terminal transmembrane helix) with SLC5A2/SGLT2 (via TM13); this interaction enhances SLC5A2 transporter activity. Interacts with PDZK1.

It is found in the apical cell membrane. Its function is as follows. Auxiliary protein of electrogenic Na(+)-coupled sugar symporter SLC5A2/SGLT2 and SLC5A1/SGLT1. Essential for the transporter activity of SLC5A2/SGLT2 but not SLC5A1/SGLT1. The protein is PDZK1-interacting protein 1 of Homo sapiens (Human).